Reading from the N-terminus, the 484-residue chain is Nuclear rim protein 1 (484 aa).

Phosphoserine is present on serine 3. 2 helical membrane-spanning segments follow: residues 145 to 165 (FTIF…MFGY) and 252 to 272 (TAIV…AIVF). Residues 416-457 (SSNENLEKGGAYLPNQDQNRPSKSLSPLRKTPLSARQKRFEG) form a disordered region. Serine 417 is subject to Phosphoserine. Polar residues predominate over residues 430–440 (NQDQNRPSKSL). Serine 474 carries the phosphoserine modification.

It belongs to the NUR1 family. Interacts with CSM1.

Its subcellular location is the nucleus membrane. Member of a perinuclear network that controls recombination at multiple loci to maintain genome stability. Required for rDNA repeat stability. The chain is Nuclear rim protein 1 (NUR1) from Saccharomyces cerevisiae (strain ATCC 204508 / S288c) (Baker's yeast).